We begin with the raw amino-acid sequence, 328 residues long: Phosphate acetyltransferase (328 aa).

This sequence belongs to the phosphate acetyltransferase and butyryltransferase family.

The protein localises to the cytoplasm. It carries out the reaction acetyl-CoA + phosphate = acetyl phosphate + CoA. The protein operates within metabolic intermediate biosynthesis; acetyl-CoA biosynthesis; acetyl-CoA from acetate: step 2/2. This is Phosphate acetyltransferase (pta) from Staphylococcus aureus (strain MSSA476).